The chain runs to 200 residues: Octanoyltransferase (200 aa).

The BPL/LPL catalytic domain maps to 27–200; that stretch reads GAEDDQLWLV…WAELFSARWR (174 aa). Residues 66 to 73, 134 to 136, and 147 to 149 each bind substrate; these read RGGQITYH, SLG, and GIA. The Acyl-thioester intermediate role is filled by Cys165.

This sequence belongs to the LipB family.

It is found in the cytoplasm. It carries out the reaction octanoyl-[ACP] + L-lysyl-[protein] = N(6)-octanoyl-L-lysyl-[protein] + holo-[ACP] + H(+). It functions in the pathway protein modification; protein lipoylation via endogenous pathway; protein N(6)-(lipoyl)lysine from octanoyl-[acyl-carrier-protein]: step 1/2. Functionally, catalyzes the transfer of endogenously produced octanoic acid from octanoyl-acyl-carrier-protein onto the lipoyl domains of lipoate-dependent enzymes. Lipoyl-ACP can also act as a substrate although octanoyl-ACP is likely to be the physiological substrate. This is Octanoyltransferase from Dichelobacter nodosus (strain VCS1703A).